Reading from the N-terminus, the 951-residue chain is Valine--tRNA ligase (951 aa).

The 'HIGH' region signature appears at 42 to 52 (PNVTGSLHMGH). A 'KMSKS' region motif is present at residues 554–558 (KMSKS). Residue Lys-557 coordinates ATP. A coiled-coil region spans residues 880-944 (AGLINKEDEL…AEAKAKLIEQ (65 aa)).

This sequence belongs to the class-I aminoacyl-tRNA synthetase family. ValS type 1 subfamily. As to quaternary structure, monomer.

It is found in the cytoplasm. The catalysed reaction is tRNA(Val) + L-valine + ATP = L-valyl-tRNA(Val) + AMP + diphosphate. Functionally, catalyzes the attachment of valine to tRNA(Val). As ValRS can inadvertently accommodate and process structurally similar amino acids such as threonine, to avoid such errors, it has a 'posttransfer' editing activity that hydrolyzes mischarged Thr-tRNA(Val) in a tRNA-dependent manner. This is Valine--tRNA ligase from Shigella boydii serotype 4 (strain Sb227).